The chain runs to 201 residues: 3-isopropylmalate dehydratase small subunit (201 aa).

This sequence belongs to the LeuD family. LeuD type 1 subfamily. In terms of assembly, heterodimer of LeuC and LeuD.

The catalysed reaction is (2R,3S)-3-isopropylmalate = (2S)-2-isopropylmalate. It functions in the pathway amino-acid biosynthesis; L-leucine biosynthesis; L-leucine from 3-methyl-2-oxobutanoate: step 2/4. In terms of biological role, catalyzes the isomerization between 2-isopropylmalate and 3-isopropylmalate, via the formation of 2-isopropylmaleate. This is 3-isopropylmalate dehydratase small subunit from Shewanella halifaxensis (strain HAW-EB4).